Reading from the N-terminus, the 340-residue chain is DNA-directed RNA polymerase subunit alpha (340 aa).

The interval 1-237 (MSSDELVYMN…EQMNPFINFD (237 aa)) is alpha N-terminal domain (alpha-NTD). Residues 256–340 (FNENLYRSVD…PEEDQIKEGE (85 aa)) are alpha C-terminal domain (alpha-CTD).

This sequence belongs to the RNA polymerase alpha chain family. In terms of assembly, homodimer. The RNAP catalytic core consists of 2 alpha, 1 beta, 1 beta' and 1 omega subunit. When a sigma factor is associated with the core the holoenzyme is formed, which can initiate transcription.

The enzyme catalyses RNA(n) + a ribonucleoside 5'-triphosphate = RNA(n+1) + diphosphate. DNA-dependent RNA polymerase catalyzes the transcription of DNA into RNA using the four ribonucleoside triphosphates as substrates. The sequence is that of DNA-directed RNA polymerase subunit alpha from Desulforapulum autotrophicum (strain ATCC 43914 / DSM 3382 / VKM B-1955 / HRM2) (Desulfobacterium autotrophicum).